The following is a 395-amino-acid chain: Elongation factor Tu (395 aa).

Residues 10–204 (KPHLNIGTIG…AVDNWIEEPV (195 aa)) form the tr-type G domain. The interval 19-26 (GHVDHGKT) is G1. 19-26 (GHVDHGKT) lines the GTP pocket. Threonine 26 provides a ligand contact to Mg(2+). The G2 stretch occupies residues 60–64 (GITIN). The tract at residues 81-84 (DCPG) is G3. GTP contacts are provided by residues 81 to 85 (DCPGH) and 136 to 139 (NKVD). Residues 136–139 (NKVD) form a G4 region. Residues 174-176 (SAL) are G5.

Belongs to the TRAFAC class translation factor GTPase superfamily. Classic translation factor GTPase family. EF-Tu/EF-1A subfamily. As to quaternary structure, monomer.

The protein resides in the cytoplasm. The enzyme catalyses GTP + H2O = GDP + phosphate + H(+). Its function is as follows. GTP hydrolase that promotes the GTP-dependent binding of aminoacyl-tRNA to the A-site of ribosomes during protein biosynthesis. This Flavobacterium johnsoniae (strain ATCC 17061 / DSM 2064 / JCM 8514 / BCRC 14874 / CCUG 350202 / NBRC 14942 / NCIMB 11054 / UW101) (Cytophaga johnsonae) protein is Elongation factor Tu.